Reading from the N-terminus, the 336-residue chain is Cell division protein ZipA (336 aa).

Topologically, residues 1–2 (ME) are periplasmic. The chain crosses the membrane as a helical span at residues 3-23 (LHILFFILAGLLIAVLIGFSL). Residues 24 to 336 (WSARREKSRI…SRQAYLARVS (313 aa)) are Cytoplasmic-facing.

This sequence belongs to the ZipA family. In terms of assembly, interacts with FtsZ via their C-terminal domains.

The protein resides in the cell inner membrane. Functionally, essential cell division protein that stabilizes the FtsZ protofilaments by cross-linking them and that serves as a cytoplasmic membrane anchor for the Z ring. Also required for the recruitment to the septal ring of downstream cell division proteins. The sequence is that of Cell division protein ZipA from Actinobacillus pleuropneumoniae serotype 5b (strain L20).